Reading from the N-terminus, the 145-residue chain is Large ribosomal subunit protein uL13 (145 aa).

The protein belongs to the universal ribosomal protein uL13 family. Part of the 50S ribosomal subunit.

Functionally, this protein is one of the early assembly proteins of the 50S ribosomal subunit, although it is not seen to bind rRNA by itself. It is important during the early stages of 50S assembly. This chain is Large ribosomal subunit protein uL13, found in Brevibacillus brevis (strain 47 / JCM 6285 / NBRC 100599).